A 354-amino-acid chain; its full sequence is MKKATSLSELGFDAGDASSGFFRPVSGDSSTPTSQHHRRRLTKVSVIGAGNVGMAIAQTILTRDLADEIALVDAVPDKLRGEMLDLQHAAAFLPRTRLVSGTDMSVTRGSDLVIVTAGARQIQGETRLDLLQRNVALFRKIVPPLAEQSHDALLLVVSNPVDVLTYVAWKLSGFPASRVIGSGTNLDSSRFRFLLAEHLDVNAQDVQAYMVGEHGDSSVAVWSSVSVAGMPVLKSLQESHRCFDEEALEGIRRAVVDSAYEVISLKGYTSWAIGYSVASLAASLLRDQRRIHPVSVLARGFHGIPDGTTSSSACPPRRPRRRPGRREMELTEEEAKRLRRSAKTIWENCQLLGL.

Residues 73–78 (DAVPDK) and arginine 120 contribute to the NAD(+) site. Substrate-binding residues include arginine 127, asparagine 159, and arginine 190. Asparagine 159 contacts NAD(+). Histidine 214 functions as the Proton acceptor in the catalytic mechanism. Threonine 269 provides a ligand contact to substrate. The segment at 302 to 332 (HGIPDGTTSSSACPPRRPRRRPGRREMELTE) is disordered.

Belongs to the LDH/MDH superfamily. LDH family. Homotetramer.

It carries out the reaction (S)-lactate + NAD(+) = pyruvate + NADH + H(+). The protein operates within fermentation; pyruvate fermentation to lactate; (S)-lactate from pyruvate: step 1/1. This chain is L-lactate dehydrogenase, found in Zea mays (Maize).